The chain runs to 880 residues: MAYRKRGARREANINNNDRMQEKDDEKQDQNNRMQLSDKVLSKKEEVVTDNQEEIKIADEVKKSTKEESKQLLEVLKTKEEHQKEIQYEILQKTIPTFEPKESILKKLEDIKPEQAKKQTKLFRIFEPRQLPIYRANGEKELRNRWYWKLKKDTLPDGDYDVREYFLNLYDQVLTEMPDYLLLKDMAVENKNSRDAGKVVDSETASICDAIFQDEETEGAVRRFIAEMRQRVQADRNVVNYPSILHPIDYAFNEYFLQHQLVEPLNNDIIFNYIPERIRNDVNYILNMDRNLPSTARYIRPNLLQDRLNLHDNFESLWDTITTSNYILARSVVPDLKELVSTEAQIQKMSQDLQLEALTIQSETQFLTGINSQAANDCFKTLIAAMLSQRTMSLDFVTTNYMSLISGMWLLTVVPNDMFIRESLVACQLAIVNTIIYPAFGMQRMHYRNGDPQTPFQIAEQQIQNFQVANWLHFVNNNQFRQVVIDGVLNQVLNDNIRDGHVINQLMEALMQLSRQQFPTMPVDYKRSIQRGILLLSNRLGQLVDLTRLLAYNYETLMACVTMNMQHVQTLTTEKLQLTSVTSLCMLIGNATVIPSPQTLFHYYNVNVNFHSNYNERINDAVAIITAANRLNLYQKKMKAIVEDFLKRLHIFDVARVPDDQMYRLRDRLRLLPVEVRRLDIFNLILMNMDQIERASDKIAQGVIIAYRDMQLERDEMYGYVNIARNLDGFQQINLEELMRTGDYAQITNMLLNNQPVALVGALPFVTDSSVISLIAKLDATVFAQIVKLRKVDTLKPILYKINSDSNDFYLVANYDWVPTSTTKVYKQVPQQFDFRNSMHMLTSNLTFTVYSDLLAFVSADTVEPINAVAFDNMRIMNEL.

Positions 1-39 are disordered; the sequence is MAYRKRGARREANINNNDRMQEKDDEKQDQNNRMQLSDK. The interval 1–80 is 5-fold hub; involved in the encapsidation of VP1 and VP3; it reads MAYRKRGARR…QLLEVLKTKE (80 aa). Residues 19–30 show a composition bias toward basic and acidic residues; that stretch reads RMQEKDDEKQDQ. Hydrophobic stretches follow at residues 394–414 and 422–442; these read LDFVTTNYMSLISGMWLLTVV and ESLVACQLAIVNTIIYPAFGM.

Belongs to the rotavirus VP2 family. As to quaternary structure, homodecamer; each decamer is made up of two conformers of VP2, called VP2A and VP2B. Interacts with a VP1-VP3 complex. Interacts with the intermediate capsid protein VP6. Interacts with NSP5. Interacts (via N-terminus) with NSP2. Sumoylated with SUMO1 and SUMO2. Sumoylation of viral proteins seems to have a positive role on viral replication.

The protein resides in the virion. Inner capsid protein that self-assembles to form an icosahedral capsid with a T=2 symmetry, which consists of 120 copies of VP2, with channels at each of its five-fold vertices. This capsid constitutes the innermost concentric layer of the viral mature particle. It encapsidates the polymerase VP1, the capping enzyme VP3 and the genomic dsRNA, thereby defining the core. The innermost VP2 capsid and the intermediate VP6 capsid remain intact following cell entry to protect the dsRNA from degradation and to prevent unfavorable antiviral responses in the host cell during all the replication cycle of the virus. Nascent transcripts are transcribed within the structural confines of this double-layered particle (DLP) and are extruded through the channels formed by VP2 N-termini. VP2 is required for the replicase activity of VP1 polymerase. Probably recruits a copy of a VP1-VP3 complex, potentially along with a segment of plus-strand RNA, as a decamer of VP2 assembles. May activate the autoinhibited VP1/RNA complex to coordinate packaging and genome replication. In Rotavirus A (strain RVA/Cow/United States/WC3/1981/G6P7[5]) (RV-A), this protein is Inner capsid protein VP2.